The primary structure comprises 267 residues: Indole-3-glycerol phosphate synthase (267 aa).

Belongs to the TrpC family.

The catalysed reaction is 1-(2-carboxyphenylamino)-1-deoxy-D-ribulose 5-phosphate + H(+) = (1S,2R)-1-C-(indol-3-yl)glycerol 3-phosphate + CO2 + H2O. Its pathway is amino-acid biosynthesis; L-tryptophan biosynthesis; L-tryptophan from chorismate: step 4/5. In Polynucleobacter necessarius subsp. necessarius (strain STIR1), this protein is Indole-3-glycerol phosphate synthase.